The chain runs to 552 residues: MTKYVFVTGGVVSSLGKGIAAASLAAILESRGLKVTLLKLDPYINVDPGTMSPFQHGEVFVTEDGAETDLDLGHYERFISTKMRKANNFTTGQIYESVIRKERRGDYLGKTVQVIPHITNEIQAFIERGAASATCGEPDVAIVEIGGTVGDIESLPFLEAARQMSLRLGRNSACFVHLTLVPYVATAGELKTKPTQHSVQKLREIGILPHVLLCRADRRIPDDESKKISMFSNVPEDAVISVWDADSIYKIPQMLHDQGLDRIICEELKLSPKDADLSMWSELVEKLENPKHEVTIGMVGKYVDLTESYKSLIEALRHASLHTSTRVNIEYIDSEEIEANGVDSLKHLDAVLVPGGFGRRGTEGKIAAIRYARESKVPYLGICLGMQLAVIEFARDVVGLKQANSTEFDSETPERVVALITEWYDRDGKVETRTEESDLGGTMRLGSQRCPIKPGTMAEEIYGKDVNERHRHRYEVNNRFVPQLEAGGLIISARTPSEDLPEMMELPRSMHPWFVGVQFHPEFTSTPRDGHPLFKSFVEAAFANKQARGVKA.

Residues 1–270 (MTKYVFVTGG…DRIICEELKL (270 aa)) form an amidoligase domain region. Position 13 (Ser-13) interacts with CTP. Residue Ser-13 participates in UTP binding. ATP is bound by residues 14-19 (SLGKGI) and Asp-71. Residues Asp-71 and Glu-144 each contribute to the Mg(2+) site. Residues 151–153 (DIE), 191–196 (KTKPTQ), and Lys-227 contribute to the CTP site. UTP-binding positions include 191-196 (KTKPTQ) and Lys-227. Residues 295-547 (TIGMVGKYVD…VEAAFANKQA (253 aa)) enclose the Glutamine amidotransferase type-1 domain. An L-glutamine-binding site is contributed by Gly-356. Cys-383 (nucleophile; for glutamine hydrolysis) is an active-site residue. L-glutamine contacts are provided by residues 384 to 387 (LGMQ), Glu-407, and Arg-473. Residues His-520 and Glu-522 contribute to the active site.

The protein belongs to the CTP synthase family. In terms of assembly, homotetramer.

The catalysed reaction is UTP + L-glutamine + ATP + H2O = CTP + L-glutamate + ADP + phosphate + 2 H(+). It carries out the reaction L-glutamine + H2O = L-glutamate + NH4(+). It catalyses the reaction UTP + NH4(+) + ATP = CTP + ADP + phosphate + 2 H(+). It functions in the pathway pyrimidine metabolism; CTP biosynthesis via de novo pathway; CTP from UDP: step 2/2. With respect to regulation, allosterically activated by GTP, when glutamine is the substrate; GTP has no effect on the reaction when ammonia is the substrate. The allosteric effector GTP functions by stabilizing the protein conformation that binds the tetrahedral intermediate(s) formed during glutamine hydrolysis. Inhibited by the product CTP, via allosteric rather than competitive inhibition. Catalyzes the ATP-dependent amination of UTP to CTP with either L-glutamine or ammonia as the source of nitrogen. Regulates intracellular CTP levels through interactions with the four ribonucleotide triphosphates. This Burkholderia ambifaria (strain ATCC BAA-244 / DSM 16087 / CCUG 44356 / LMG 19182 / AMMD) (Burkholderia cepacia (strain AMMD)) protein is CTP synthase.